The sequence spans 60 residues: Cecropin-B type 1 (60 aa).

Residues 1–24 (MNFNKLFALVLLIGLVLLTGQTEA) form the signal peptide. At I58 the chain carries Isoleucine amide.

This sequence belongs to the cecropin family.

It localises to the secreted. In terms of biological role, cecropins have lytic and antibacterial activity against several Gram-positive and Gram-negative bacteria. This Aedes albopictus (Asian tiger mosquito) protein is Cecropin-B type 1 (CECB1).